The chain runs to 163 residues: ADP-ribosylation factor-like protein 2-binding protein (163 aa).

This sequence belongs to the ARL2BP family. In terms of assembly, interacts with GTP bound ARL2 and ARL3; the complex ARL2-ARL2BP as well as ARL2BP alone, binds to SLC25A4/ANT1. Interaction with ARL2 may be required for targeting to cilia basal body. Interacts with STAT3; interaction is enhanced with ARL2. Found in a complex with ARL2BP, ARL2 and SLC25A6. Found in a complex with ARL2, ARL2BP and SLC25A4. Interacts with STAT2, STAT3 and STAT4. As to expression, widely expressed, with most abundant activity in brain, especially in hippocampus and cortex. Also expressed in lung, cerebellum, liver, kidney, retina, spleen, muscle and heart (at protein level).

The protein resides in the cytoplasm. It localises to the mitochondrion intermembrane space. Its subcellular location is the cytoskeleton. The protein localises to the microtubule organizing center. It is found in the centrosome. The protein resides in the nucleus. It localises to the cilium basal body. Functionally, together with ARL2, plays a role in the nuclear translocation, retention and transcriptional activity of STAT3. May play a role as an effector of ARL2. The sequence is that of ADP-ribosylation factor-like protein 2-binding protein (Arl2bp) from Mus musculus (Mouse).